Consider the following 527-residue polypeptide: Cytochrome P450 monooxygenase olcJ (527 aa).

The helical transmembrane segment at 21-43 (GLLTRYNVFMAISITVTALYLIH) threads the bilayer. Cys464 contributes to the heme binding site.

The protein belongs to the cytochrome P450 family. It depends on heme as a cofactor.

It is found in the membrane. It participates in secondary metabolite biosynthesis; terpenoid biosynthesis. Functionally, cytochrome P450 monooxygenase; part of the gene cluster that mediates the biosynthesis of 15-deoxyoxalicine B. The first step of the pathway is the synthesis of nicotinyl-CoA from nicotinic acid by the nicotinic acid-CoA ligase olcI. Nicotinyl-CoA is then a substrate of polyketide synthase olcA to produce 4-hydroxy-6-(3-pyridinyl)-2H-pyran-2-one (HPPO) which is further prenylated by the polyprenyl transferase olcH to yield geranylgeranyl-HPPO. Geranylgeranyl pyrophosphate is provided by the cluster-specific geranylgeranyl pyrophosphate synthase olcC. The FAD-dependent monooxygenase olcE catalyzes the epoxidation of geranylgeranyl-HPPO and the terpene cyclase olcD catalyzes the cyclization of the terpenoid component, resulting in the formation of the tricyclic terpene moiety seen in predecaturin E. The cytochrome P450 monooxygenase then catalyzes the allylic oxidation of predecaturin E, which is followed by spirocylization with concomitant loss of one molecule of water to form decaturin E. Decaturin E is the substrate of the cytochrome P450 monooxygenase olcJ which hydroxylates it at the C-29 position to form decaturin F. The short-chain dehydrogenase/reductase olcF may catalyze the oxidation of decaturin F to generate the 29-hydroxyl-27-one intermediate, and subsequent hemiacetal formation probably leads to the formation of decaturin C. The dioxygenase olcK may be a peroxisomal enzyme that catalyzes the hydroxylation of decaturin C into decaturin A once decaturin C is shuttled into the peroxisome by the MFS transporter olcL. Finally the cytochrome P450 monooxygenase olcB catalyzes the oxidative rearrangement to yield 15-deoxyoxalicine B. In the absence of olcJ, decaturin E may be shunted to a pathway in which it is oxidized to a ketone, possibly by olcF, to form decaturin D, which undergoes further allylic oxidation to yield decaturin G. Moreover, in the absence of oclK or oclL, oclB can convert decaturin C into 15-deoxyoxalicine A. This chain is Cytochrome P450 monooxygenase olcJ, found in Penicillium canescens.